A 115-amino-acid polypeptide reads, in one-letter code: uncharacterized protein (115 aa).

This is an uncharacterized protein from Saccharomyces cerevisiae (strain ATCC 204508 / S288c) (Baker's yeast).